Consider the following 229-residue polypeptide: Small ribosomal subunit protein uS3 (229 aa).

The 69-residue stretch at I38–K106 folds into the KH type-2 domain. A compositionally biased stretch (acidic residues) spans P208–K217. The interval P208 to E229 is disordered. Residues E218 to E229 show a composition bias toward basic and acidic residues.

It belongs to the universal ribosomal protein uS3 family. Part of the 30S ribosomal subunit. Forms a tight complex with proteins S10 and S14.

In terms of biological role, binds the lower part of the 30S subunit head. Binds mRNA in the 70S ribosome, positioning it for translation. The chain is Small ribosomal subunit protein uS3 from Natranaerobius thermophilus (strain ATCC BAA-1301 / DSM 18059 / JW/NM-WN-LF).